A 343-amino-acid chain; its full sequence is F17e-G fimbrial adhesin (343 aa).

Positions 1-22 (MTNFYKVFLAVFILVCCNISHA) are cleaved as a signal peptide. Residues 23 to 199 (AVSFIGSTEN…LNPFTLNDTV (177 aa)) form a receptor-binding lectin domain region. A carbohydrate contacts are provided by residues 65 to 66 (AN), 110 to 111 (DT), and 138 to 141 (STQG). A disulfide bridge connects residues C75 and C132. Residues 200 to 343 (TSCRLLTPSA…GISTFTFSYQ (144 aa)) form a fimbrillin-binding domain region. Residues 287-307 (LKFGPDSPVKGNENQWQLSTG) form a disordered region. A compositionally biased stretch (polar residues) spans 298–307 (NENQWQLSTG).

This sequence belongs to the fimbrial protein family.

The protein resides in the fimbrium. Functionally, essential fimbrial adhesion factor that mediates binding to N-acetylglucosamine-containing receptors in the host intestinal microvilli, leading to colonization of the intestinal tissue, and diarrhea or septicemia. Also confers adhesiveness to laminin and basement membranes. The chain is F17e-G fimbrial adhesin (f17eG) from Escherichia coli.